Here is a 380-residue protein sequence, read N- to C-terminus: Hydrogenase maturation factor HypD1 (380 aa).

Fe cation contacts are provided by cysteine 36, cysteine 64, and cysteine 67.

The protein belongs to the HypD family. The cofactor is [4Fe-4S] cluster.

It participates in protein modification; [NiFe] hydrogenase maturation. Its function is as follows. Involved in the maturation of [NiFe] hydrogenases. Involved in the biosynthesis of the Fe(CN)(2)CO cofactor. The chain is Hydrogenase maturation factor HypD1 (hypD1) from Bradyrhizobium diazoefficiens (strain JCM 10833 / BCRC 13528 / IAM 13628 / NBRC 14792 / USDA 110).